A 205-amino-acid chain; its full sequence is Thymidine kinase (205 aa).

ATP contacts are provided by residues 9–16 (SAMNAGKT) and 88–91 (DECH). Glutamate 89 functions as the Proton acceptor in the catalytic mechanism. Zn(2+) contacts are provided by cysteine 146, cysteine 148, cysteine 183, and histidine 186.

Belongs to the thymidine kinase family. In terms of assembly, homotetramer.

Its subcellular location is the cytoplasm. It carries out the reaction thymidine + ATP = dTMP + ADP + H(+). The protein is Thymidine kinase of Blochmanniella pennsylvanica (strain BPEN).